Consider the following 332-residue polypeptide: Holliday junction branch migration complex subunit RuvB (332 aa).

The interval 1–181 (MSRILDNEIM…FGITGHMEYY (181 aa)) is large ATPase domain (RuvB-L). ATP-binding positions include Leu20, Arg21, Gly62, Lys65, Thr66, Thr67, 128 to 130 (EDF), Arg171, Tyr181, and Arg218. Mg(2+) is bound at residue Thr66. A small ATPAse domain (RuvB-S) region spans residues 182-252 (AHADLTEIVE…ITDKALTMLD (71 aa)). Residues 255–332 (HEGLDYVDQK…EHLGYEYSEK (78 aa)) are head domain (RuvB-H). DNA is bound by residues Arg291, Arg310, Arg312, and Arg315.

It belongs to the RuvB family. As to quaternary structure, homohexamer. Forms an RuvA(8)-RuvB(12)-Holliday junction (HJ) complex. HJ DNA is sandwiched between 2 RuvA tetramers; dsDNA enters through RuvA and exits via RuvB. An RuvB hexamer assembles on each DNA strand where it exits the tetramer. Each RuvB hexamer is contacted by two RuvA subunits (via domain III) on 2 adjacent RuvB subunits; this complex drives branch migration. In the full resolvosome a probable DNA-RuvA(4)-RuvB(12)-RuvC(2) complex forms which resolves the HJ.

It is found in the cytoplasm. It catalyses the reaction ATP + H2O = ADP + phosphate + H(+). Its function is as follows. The RuvA-RuvB-RuvC complex processes Holliday junction (HJ) DNA during genetic recombination and DNA repair, while the RuvA-RuvB complex plays an important role in the rescue of blocked DNA replication forks via replication fork reversal (RFR). RuvA specifically binds to HJ cruciform DNA, conferring on it an open structure. The RuvB hexamer acts as an ATP-dependent pump, pulling dsDNA into and through the RuvAB complex. RuvB forms 2 homohexamers on either side of HJ DNA bound by 1 or 2 RuvA tetramers; 4 subunits per hexamer contact DNA at a time. Coordinated motions by a converter formed by DNA-disengaged RuvB subunits stimulates ATP hydrolysis and nucleotide exchange. Immobilization of the converter enables RuvB to convert the ATP-contained energy into a lever motion, pulling 2 nucleotides of DNA out of the RuvA tetramer per ATP hydrolyzed, thus driving DNA branch migration. The RuvB motors rotate together with the DNA substrate, which together with the progressing nucleotide cycle form the mechanistic basis for DNA recombination by continuous HJ branch migration. Branch migration allows RuvC to scan DNA until it finds its consensus sequence, where it cleaves and resolves cruciform DNA. This Streptococcus pneumoniae serotype 2 (strain D39 / NCTC 7466) protein is Holliday junction branch migration complex subunit RuvB.